Here is a 341-residue protein sequence, read N- to C-terminus: Very-long-chain 3-oxoacyl-CoA reductase (341 aa).

The helical transmembrane segment at 22-42 (AVTGFLLVGIASFAAPLISTI) threads the bilayer. Positions 67, 123, 131, 150, 217, 221, 250, and 252 each coordinate NADP(+). The active-site Proton donor is tyrosine 217. Lysine 221 functions as the Lowers pKa of active site Tyr in the catalytic mechanism.

The protein belongs to the short-chain dehydrogenases/reductases (SDR) family.

It localises to the endoplasmic reticulum membrane. It catalyses the reaction a very-long-chain (3R)-3-hydroxyacyl-CoA + NADP(+) = a very-long-chain 3-oxoacyl-CoA + NADPH + H(+). Its pathway is lipid metabolism; fatty acid biosynthesis. Component of the microsomal membrane bound fatty acid elongation system, which produces the 26-carbon very long-chain fatty acids (VLCFA) from palmitate. Catalyzes the reduction of the 3-ketoacyl-CoA intermediate that is formed in each cycle of fatty acid elongation. VLCFAs serve as precursors for ceramide and sphingolipids. In Pyrenophora tritici-repentis (strain Pt-1C-BFP) (Wheat tan spot fungus), this protein is Very-long-chain 3-oxoacyl-CoA reductase.